The following is a 476-amino-acid chain: Glycogen synthase (476 aa).

Lys15 provides a ligand contact to ADP-alpha-D-glucose.

It belongs to the glycosyltransferase 1 family. Bacterial/plant glycogen synthase subfamily.

It carries out the reaction [(1-&gt;4)-alpha-D-glucosyl](n) + ADP-alpha-D-glucose = [(1-&gt;4)-alpha-D-glucosyl](n+1) + ADP + H(+). Its pathway is glycan biosynthesis; glycogen biosynthesis. In terms of biological role, synthesizes alpha-1,4-glucan chains using ADP-glucose. The chain is Glycogen synthase from Haemophilus influenzae (strain PittEE).